A 214-amino-acid chain; its full sequence is Pyridoxine/pyridoxamine 5'-phosphate oxidase (214 aa).

Substrate-binding positions include 9-12 (RKDY) and lysine 67. FMN is bound by residues 62-67 (RMVLLK), 77-78 (FT), arginine 83, lysine 84, and glutamine 106. Substrate-binding residues include tyrosine 124, arginine 128, and serine 132. Residues 141–142 (QS) and tryptophan 186 contribute to the FMN site. 192–194 (RLH) serves as a coordination point for substrate. Arginine 196 serves as a coordination point for FMN.

Belongs to the pyridoxamine 5'-phosphate oxidase family. Homodimer. It depends on FMN as a cofactor.

The enzyme catalyses pyridoxamine 5'-phosphate + O2 + H2O = pyridoxal 5'-phosphate + H2O2 + NH4(+). It carries out the reaction pyridoxine 5'-phosphate + O2 = pyridoxal 5'-phosphate + H2O2. It functions in the pathway cofactor metabolism; pyridoxal 5'-phosphate salvage; pyridoxal 5'-phosphate from pyridoxamine 5'-phosphate: step 1/1. Its pathway is cofactor metabolism; pyridoxal 5'-phosphate salvage; pyridoxal 5'-phosphate from pyridoxine 5'-phosphate: step 1/1. In terms of biological role, catalyzes the oxidation of either pyridoxine 5'-phosphate (PNP) or pyridoxamine 5'-phosphate (PMP) into pyridoxal 5'-phosphate (PLP). The protein is Pyridoxine/pyridoxamine 5'-phosphate oxidase of Nostoc sp. (strain PCC 7120 / SAG 25.82 / UTEX 2576).